Here is a 476-residue protein sequence, read N- to C-terminus: MSQPAFKIIIVGCSVTGLTLAHCLDKLGVEYTILEKRSAVVLQEGASVAVMPNGGRILDQLGLYDAFEKATVPLDLTDAYLPDQDFRFTSDYPRRVLATFGYPVAFMERRGLLEILYDGIADKSKIHLNKGVTHVEQNDDGAKVHTEDGEVYEGDIVVGADGIHSKTLREMWRMMGEPVVNGIAQSESQNMSVAFSCVFGISHDVPELQPGEQILRMCNGSTIFVMGSKGVVFWFIVTQLNRRYEYHDAPRYTTEEAAAFCEARKDAEIKEGVTFECIWRKQHVFNMLPLQESLFQTWSHGRVVCIGDSVHKMTINLGQGANCAIEDVTVLCNMLRAFLAEKREKKPSYSEIDTLLRRFNKEHLPRASTIVETSRLTTRVHAQVGISQRIMTRWVVPYFGKFLQGKPLGLIASGPVLDFLPLKRASYPGWERYRVKKSSRGAGFWITAFLSLSLLAVAATMYGWGNSQIWADWNIL.

A signal peptide spans 1-21 (MSQPAFKIIIVGCSVTGLTLA). 3 residues coordinate FAD: E35, A49, and R109. N190 and N219 each carry an N-linked (GlcNAc...) asparagine glycan. 2 residues coordinate FAD: D308 and A321. A helical transmembrane segment spans residues 441–461 (GAGFWITAFLSLSLLAVAATM).

This sequence belongs to the paxM FAD-dependent monooxygenase family. FAD serves as cofactor.

It localises to the membrane. Its pathway is secondary metabolite biosynthesis; terpenoid biosynthesis. Its function is as follows. FAD-dependent monooxygenase; part of the gene cluster that mediates the biosynthesis of the diterpenoid pyrones subglutinols A and B. The first step of the pathway is the synthesis of the alpha-pyrone moiety by the polyketide synthase dpasA via condensation of one acetyl-CoA starter unit with 3 malonyl-CoA units and 2 methylations. The alpha-pyrone is then combined with geranylgeranyl pyrophosphate (GGPP) formed by the GGPP synthase dpasD through the action of the prenyltransferase dpasC to yield a linear alpha-pyrone diterpenoid. Subsequent steps in the diterpenoid pyrone biosynthetic pathway involve the decalin core formation, which is initiated by the epoxidation of the C10-C11 olefin by the FAD-dependent oxidoreductase dpasE, and is followed by a cyclization cascade catalyzed by the terpene cyclase dpasB. The FAD-linked oxidoreductase dpasF is then involved in tetrahydrofuran (THF) ring formation at the C5 unit to complete the formation of subglutinols A and B. DpasF possesses also an additional catalytic ability of multi-step oxidations to generate a new DDP analog with an enone system at the C5 named FDDP A. This is FAD-dependent monooxygenase dpasE from Apiospora sacchari (Arthrinium sacchari).